The primary structure comprises 447 residues: Argininosuccinate synthase (447 aa).

ATP contacts are provided by residues 17–25 and Ala-43; that span reads AFSGGLDTS. Tyr-99 contributes to the L-citrulline binding site. ATP-binding residues include Gly-129 and Thr-131. L-aspartate-binding residues include Thr-131, Asn-135, and Asp-136. Asn-135 contacts L-citrulline. Asp-136 serves as a coordination point for ATP. Arg-139 and Ser-192 together coordinate L-citrulline. Residue Asp-194 participates in ATP binding. L-citrulline-binding residues include Thr-201, Glu-203, and Glu-280.

Belongs to the argininosuccinate synthase family. Type 2 subfamily. In terms of assembly, homotetramer.

The protein resides in the cytoplasm. The enzyme catalyses L-citrulline + L-aspartate + ATP = 2-(N(omega)-L-arginino)succinate + AMP + diphosphate + H(+). It participates in amino-acid biosynthesis; L-arginine biosynthesis; L-arginine from L-ornithine and carbamoyl phosphate: step 2/3. The protein is Argininosuccinate synthase of Escherichia fergusonii (strain ATCC 35469 / DSM 13698 / CCUG 18766 / IAM 14443 / JCM 21226 / LMG 7866 / NBRC 102419 / NCTC 12128 / CDC 0568-73).